Reading from the N-terminus, the 440-residue chain is MARFFQPKKHSTLDTKHQPVTIERLDHQGSGLAFLHKKPLFVDGALPGEEVLIQLTENKSKYARGQLIKVLKPSAERVAPFCAHYAQCGGCDLQHLDRAGQIHHKQQALSQLMVKFAGQSLALSAPVCSDDQGYRRRARLSLMWDKKTQQLQLGFRRKQSKAIVNVTHCPVLEPSLNALLPDLNALLSEWSQPERLGHVELVKGDNTRVLVLRHLGALIEQDQQRLTDFASQNQLTLYLMLEAGELQHVQGEAPYCEETGSRLSFLPSHFIQVNRAVNQHMVVQALNWLEVSPQERVLDLFCGLGNFTLPLAKQAQAVVGVEGVDEMVQHATHNAKLNQINNVAFYQANLEQDMTSASWAQQKFAKVLLDPARAGAEGIVDQLSALGAKRVVYVSCNPATLARDSQSLLSQGFRLEKLGMLDMFPHTSHLESMALFVKKG.

One can recognise a TRAM domain in the interval 11–69 (STLDTKHQPVTIERLDHQGSGLAFLHKKPLFVDGALPGEEVLIQLTENKSKYARGQLIK). C82, C88, C91, and C169 together coordinate [4Fe-4S] cluster. Residues Q272, F301, N306, E322, N349, and D370 each coordinate S-adenosyl-L-methionine. C396 (nucleophile) is an active-site residue.

This sequence belongs to the class I-like SAM-binding methyltransferase superfamily. RNA M5U methyltransferase family. RlmD subfamily.

The catalysed reaction is uridine(1939) in 23S rRNA + S-adenosyl-L-methionine = 5-methyluridine(1939) in 23S rRNA + S-adenosyl-L-homocysteine + H(+). Functionally, catalyzes the formation of 5-methyl-uridine at position 1939 (m5U1939) in 23S rRNA. The protein is 23S rRNA (uracil(1939)-C(5))-methyltransferase RlmD of Vibrio cholerae serotype O1 (strain M66-2).